The chain runs to 543 residues: Probable protein kinase UbiB (543 aa).

The 379-residue stretch at D123–L501 folds into the Protein kinase domain. ATP is bound by residues L129 to V137 and K152. D287 (proton acceptor) is an active-site residue. A helical membrane pass occupies residues L517 to W539.

Belongs to the ABC1 family. UbiB subfamily.

Its subcellular location is the cell inner membrane. It participates in cofactor biosynthesis; ubiquinone biosynthesis [regulation]. Is probably a protein kinase regulator of UbiI activity which is involved in aerobic coenzyme Q (ubiquinone) biosynthesis. The protein is Probable protein kinase UbiB of Yersinia pseudotuberculosis serotype O:1b (strain IP 31758).